A 296-amino-acid polypeptide reads, in one-letter code: MKDKLVKAIAKDGQVRIIGAITTELVNEGVKLHNCAPTAAAALGRMLTAGALMGTTLKSEKDTLTLQIHGGGIAKGVVVTSYADGHVKGYIGNPTADIEPNSKGKLDVSGIIGKNGNLLVIRDMGLKEPYIGQVPIYTGEIGEDLAYYYTVSEQTPSAVGLGVLVDKDLSIKSAGGFIIQMMPGADEMLADLISYRLEEIPSITEMISKGMTIEEILEYIFEDMDLKILESIAPEYRCDCSREKVERALASIGQKDLKEIYDEGKEEELKCHFCNKAYVFSHDEVGDILENYYSEK.

2 disulfide bridges follow: Cys-238–Cys-240 and Cys-271–Cys-274.

The protein belongs to the HSP33 family. Under oxidizing conditions two disulfide bonds are formed involving the reactive cysteines. Under reducing conditions zinc is bound to the reactive cysteines and the protein is inactive.

It localises to the cytoplasm. Redox regulated molecular chaperone. Protects both thermally unfolding and oxidatively damaged proteins from irreversible aggregation. Plays an important role in the bacterial defense system toward oxidative stress. This is 33 kDa chaperonin from Clostridium botulinum (strain Okra / Type B1).